A 220-amino-acid polypeptide reads, in one-letter code: MTALTILMIILAYLGGSLSSAVLVSRITGLPDPRDHGSHNPGATNVLRLGGRVAALVVLLLDVLKGTAPVYLAWYLQIKPVYLGFIGVAACLGHMYPIFFHFRGGKGVATALGTMMPIGFTMGGAVIGTWLVVLLVSGYSSLASIITVLLSPLFTYLIKPEYTLPVSLLSCLILIRHHENIARLLKGEEPRVWGRQAQRRQEEVGEMDDVAQKRDERDKK.

Transmembrane regions (helical) follow at residues 4-24, 53-73, 80-100, 116-136, and 138-158; these read LTIL…AVLV, VAAL…VYLA, PVYL…PIFF, MPIG…VLLV, and GYSS…TYLI. Residues 193–220 are disordered; sequence WGRQAQRRQEEVGEMDDVAQKRDERDKK. The segment covering 210 to 220 has biased composition (basic and acidic residues); it reads VAQKRDERDKK.

It belongs to the PlsY family. Probably interacts with PlsX.

It localises to the cell inner membrane. The catalysed reaction is an acyl phosphate + sn-glycerol 3-phosphate = a 1-acyl-sn-glycero-3-phosphate + phosphate. The protein operates within lipid metabolism; phospholipid metabolism. In terms of biological role, catalyzes the transfer of an acyl group from acyl-phosphate (acyl-PO(4)) to glycerol-3-phosphate (G3P) to form lysophosphatidic acid (LPA). This enzyme utilizes acyl-phosphate as fatty acyl donor, but not acyl-CoA or acyl-ACP. The protein is Glycerol-3-phosphate acyltransferase of Aeromonas salmonicida (strain A449).